The primary structure comprises 204 residues: Cytochrome c biogenesis ATP-binding export protein CcmA (204 aa).

An ABC transporter domain is found at 2-203 (LEADNLECVR…PAGTVRELRL (202 aa)). 34 to 41 (GRNGAGKT) provides a ligand contact to ATP.

It belongs to the ABC transporter superfamily. CcmA exporter (TC 3.A.1.107) family. In terms of assembly, the complex is composed of two ATP-binding proteins (CcmA) and two transmembrane proteins (CcmB).

The protein localises to the cell inner membrane. The catalysed reaction is heme b(in) + ATP + H2O = heme b(out) + ADP + phosphate + H(+). Part of the ABC transporter complex CcmAB involved in the biogenesis of c-type cytochromes; once thought to export heme, this seems not to be the case, but its exact role is uncertain. Responsible for energy coupling to the transport system. In Dechloromonas aromatica (strain RCB), this protein is Cytochrome c biogenesis ATP-binding export protein CcmA.